Here is a 497-residue protein sequence, read N- to C-terminus: MGTLHHLINGEMVADNGRSADVFNPSTGEAIHKVPLADGKTLQKAIDAARAAFPAWRNTPPAKRAQVLYRFKQLLEQNEARISKLISEEHGKTLEDAAGELKRGIENVEYACAAPEILKGEYSRNVGPNIDAWSDFQPIGVVAGITPFNFPAMVPLWMYPLAIACGNTFILKPSERDPSSTLLIAELFHEAGLPKGVLNVVHGDKEAVDGLLQAPEVKAISFVGSTPIAEYIYAEGTKRGKRVQALGGAKNHAVLMPDADLDNAVSALMGAAYGSCGERCMAISVAVCVGDQVADALIAKLVPQIKALKIGAGTSCGLDMGPLVTAAAQAKVTGYIDSGVAQGAELVVDGRGYQVAGHENGFFLGGSLFDRVTPEMTIYKEEIFGPVLCVVRVNSLEEAMQLINDHEYGNGTCIFTRDGEAARLFCDEIEVGMVGVNVPLPVPVAYHSFGGWKRSLFGDLHAYGPDGVRFYTRRKAITQRWPQRASHEASQFAFPSL.

Residues phenylalanine 148, lysine 172, glutamate 175, arginine 176, and serine 225 each contribute to the NAD(+) site. Cysteine 280 functions as the Nucleophile in the catalytic mechanism. Glutamate 382 lines the NAD(+) pocket.

Belongs to the aldehyde dehydrogenase family.

It carries out the reaction 3-oxopropanoate + NAD(+) + CoA + H2O = hydrogencarbonate + acetyl-CoA + NADH + H(+). Functionally, involved in the degradation of beta-alanine. Likely catalyzes the NAD(+)- and CoA-dependent oxidative decarboxylation of malonate semialdehyde (3-oxopropanoate) to acetyl-CoA. The sequence is that of Malonate-semialdehyde dehydrogenase from Pseudomonas aeruginosa (strain ATCC 15692 / DSM 22644 / CIP 104116 / JCM 14847 / LMG 12228 / 1C / PRS 101 / PAO1).